Consider the following 75-residue polypeptide: UPF0352 protein VF_1649 (75 aa).

This sequence belongs to the UPF0352 family.

This is UPF0352 protein VF_1649 from Aliivibrio fischeri (strain ATCC 700601 / ES114) (Vibrio fischeri).